The primary structure comprises 378 residues: 5-amino-6-(D-ribitylamino)uracil--L-tyrosine 4-hydroxyphenyl transferase (378 aa).

A Radical SAM core domain is found at 59 to 306; that stretch reads VTYVINRNIN…TAVARIYLGN (248 aa). [4Fe-4S] cluster is bound by residues cysteine 73, cysteine 77, and cysteine 80.

Belongs to the radical SAM superfamily. CofH family. Consists of two subunits, CofG and CofH. [4Fe-4S] cluster is required as a cofactor.

It catalyses the reaction 5-amino-6-(D-ribitylamino)uracil + L-tyrosine + S-adenosyl-L-methionine = 5-amino-5-(4-hydroxybenzyl)-6-(D-ribitylimino)-5,6-dihydrouracil + 2-iminoacetate + 5'-deoxyadenosine + L-methionine + H(+). Its pathway is cofactor biosynthesis; coenzyme F0 biosynthesis. Functionally, catalyzes the radical-mediated synthesis of 5-amino-5-(4-hydroxybenzyl)-6-(D-ribitylimino)-5,6-dihydrouracil from 5-amino-6-(D-ribitylamino)uracil and L-tyrosine. The chain is 5-amino-6-(D-ribitylamino)uracil--L-tyrosine 4-hydroxyphenyl transferase from Microcystis aeruginosa (strain NIES-843 / IAM M-2473).